Reading from the N-terminus, the 214-residue chain is Metalloproteinase inhibitor 3 (214 aa).

Positions 1-26 (MVFSTTAALSLLLALSSMQLSEVSEA) are cleaved as a signal peptide. Cysteine 27 lines the Zn(2+) pocket. Involved in metalloproteinase-binding regions lie at residues 27–30 (CTCM) and 91–92 (ES). Intrachain disulfides connect cysteine 27/cysteine 94, cysteine 29/cysteine 121, cysteine 39/cysteine 146, cysteine 148/cysteine 195, cysteine 153/cysteine 158, and cysteine 166/cysteine 187. Residues 27–146 (CTCMPNHPQE…GLNHRYQYGC (120 aa)) enclose the NTR domain. N-linked (GlcNAc...) asparagine glycosylation is present at asparagine 210.

This sequence belongs to the protease inhibitor I35 (TIMP) family. In terms of tissue distribution, expressed abundantly in brain and cartilage.

It is found in the secreted. It localises to the extracellular space. Its subcellular location is the extracellular matrix. Functionally, complexes with metalloproteinases (such as collagenases) and irreversibly inactivates them by binding to their catalytic zinc cofactor. May form part of a tissue-specific acute response to remodeling stimuli. The sequence is that of Metalloproteinase inhibitor 3 (TIMP3) from Scyliorhinus torazame (Cloudy catshark).